A 192-amino-acid chain; its full sequence is Orotate phosphoribosyltransferase (192 aa).

5-phospho-alpha-D-ribose 1-diphosphate contacts are provided by residues arginine 101, lysine 102, lysine 105, histidine 107, and 129 to 137; that span reads EDVITTGGS. Residues threonine 133 and arginine 161 each contribute to the orotate site.

It belongs to the purine/pyrimidine phosphoribosyltransferase family. PyrE subfamily. In terms of assembly, homodimer. The cofactor is Mg(2+).

It catalyses the reaction orotidine 5'-phosphate + diphosphate = orotate + 5-phospho-alpha-D-ribose 1-diphosphate. It functions in the pathway pyrimidine metabolism; UMP biosynthesis via de novo pathway; UMP from orotate: step 1/2. Functionally, catalyzes the transfer of a ribosyl phosphate group from 5-phosphoribose 1-diphosphate to orotate, leading to the formation of orotidine monophosphate (OMP). The sequence is that of Orotate phosphoribosyltransferase from Sorangium cellulosum (strain So ce56) (Polyangium cellulosum (strain So ce56)).